Here is a 466-residue protein sequence, read N- to C-terminus: 3-isopropylmalate dehydratase large subunit (466 aa).

Cysteine 347, cysteine 407, and cysteine 410 together coordinate [4Fe-4S] cluster.

Belongs to the aconitase/IPM isomerase family. LeuC type 1 subfamily. As to quaternary structure, heterodimer of LeuC and LeuD. The cofactor is [4Fe-4S] cluster.

The enzyme catalyses (2R,3S)-3-isopropylmalate = (2S)-2-isopropylmalate. It functions in the pathway amino-acid biosynthesis; L-leucine biosynthesis; L-leucine from 3-methyl-2-oxobutanoate: step 2/4. Functionally, catalyzes the isomerization between 2-isopropylmalate and 3-isopropylmalate, via the formation of 2-isopropylmaleate. The polypeptide is 3-isopropylmalate dehydratase large subunit (Salmonella paratyphi A (strain ATCC 9150 / SARB42)).